The sequence spans 471 residues: UDP-N-acetylmuramoylalanine--D-glutamate ligase (471 aa).

Glycine 123–threonine 129 contributes to the ATP binding site.

The protein belongs to the MurCDEF family.

The protein resides in the cytoplasm. The enzyme catalyses UDP-N-acetyl-alpha-D-muramoyl-L-alanine + D-glutamate + ATP = UDP-N-acetyl-alpha-D-muramoyl-L-alanyl-D-glutamate + ADP + phosphate + H(+). It participates in cell wall biogenesis; peptidoglycan biosynthesis. Cell wall formation. Catalyzes the addition of glutamate to the nucleotide precursor UDP-N-acetylmuramoyl-L-alanine (UMA). The polypeptide is UDP-N-acetylmuramoylalanine--D-glutamate ligase (Caulobacter vibrioides (strain ATCC 19089 / CIP 103742 / CB 15) (Caulobacter crescentus)).